A 122-amino-acid polypeptide reads, in one-letter code: Large ribosomal subunit protein uL14 (122 aa).

This sequence belongs to the universal ribosomal protein uL14 family. In terms of assembly, part of the 50S ribosomal subunit. Forms a cluster with proteins L3 and L19. In the 70S ribosome, L14 and L19 interact and together make contacts with the 16S rRNA in bridges B5 and B8.

Binds to 23S rRNA. Forms part of two intersubunit bridges in the 70S ribosome. This chain is Large ribosomal subunit protein uL14, found in Parvibaculum lavamentivorans (strain DS-1 / DSM 13023 / NCIMB 13966).